The sequence spans 292 residues: NAD kinase (292 aa).

The Proton acceptor role is filled by Asp-73. NAD(+)-binding positions include 73-74 (DG), 147-148 (NE), His-158, Arg-175, Asp-177, 188-193 (TAYSLS), and Gln-247.

This sequence belongs to the NAD kinase family. A divalent metal cation serves as cofactor.

It is found in the cytoplasm. It carries out the reaction NAD(+) + ATP = ADP + NADP(+) + H(+). Involved in the regulation of the intracellular balance of NAD and NADP, and is a key enzyme in the biosynthesis of NADP. Catalyzes specifically the phosphorylation on 2'-hydroxyl of the adenosine moiety of NAD to yield NADP. This is NAD kinase from Sodalis glossinidius (strain morsitans).